Here is a 444-residue protein sequence, read N- to C-terminus: MTELRQRVVREDAPPEDKESESEAKLDGETASDSESRAETAPLPTSVDDTPEVLNRALSNLSSRWKNWWVRGILTLAMIAFFFIIIYLGPMVLMMIVMCVQIKCFHEIITIGYNVYHSYDLPWFRTLSWYFLLCVNYFFYGETVTDYFFTLVQREEPLRILSKYHRFISFALYLTGFCMFVLSLVKKHYRLQFYMFGWTHVTLLIVVTQSHLVIHNLFEGMIWFIVPISCVICNDIMAYMFGFFFGRTPLIKLSPKKTWEGFIGGFFATVVFGLLLSYVMSGYRCFVCPVEYNNDTNSFTVDCEPSDLFRLQEYNIPGVIQSAIGWKTVRMYPFQIHSIALSTFASLIGPFGGFFASGFKRAFKIKDFANTIPGHGGIMDRFDCQYLMATFVNVYIASFIRGPNPSKLIQQFLTLRPDQQLHIFNTLKSHLTDKGILTSALEDE.

Basic and acidic residues predominate over residues 1 to 38 (MTELRQRVVREDAPPEDKESESEAKLDGETASDSESRA). Residues 1–48 (MTELRQRVVREDAPPEDKESESEAKLDGETASDSESRAETAPLPTSVD) form a disordered region. At Ser20 the chain carries Phosphoserine. A Phosphothreonine modification is found at Thr30. 3 positions are modified to phosphoserine: Ser32, Ser34, and Ser36. Thr50 bears the Phosphothreonine mark. 6 helical membrane-spanning segments follow: residues 78–98 (MIAFFFIIIYLGPMVLMMIVM), 129–149 (WYFLLCVNYFFYGETVTDYFF), 165–185 (HRFISFALYLTGFCMFVLSLV), 212–232 (LVIHNLFEGMIWFIVPISCVI), 261–281 (GFIGGFFATVVFGLLLSYVMS), and 339–359 (IALSTFASLIGPFGGFFASGF).

This sequence belongs to the CDS family. Homodimer. Ubiquitous. Expressed in the ganglion cell layer and inner nuclear layer of the retina.

It is found in the endoplasmic reticulum membrane. The catalysed reaction is a 1,2-diacyl-sn-glycero-3-phosphate + CTP + H(+) = a CDP-1,2-diacyl-sn-glycerol + diphosphate. It catalyses the reaction 1-octadecanoyl-2-(5Z,8Z,11Z,14Z-eicosatetraenoyl)-sn-glycero-3-phosphate + CTP + H(+) = 1-octadecanoyl-2-(5Z,8Z,11Z,14Z-eicosatetraenoyl)-sn-glycero-3-cytidine-5'-diphosphate + diphosphate. It carries out the reaction 1-octadecanoyl-2-(9Z,12Z-octadecadienoyl)-sn-glycero-3-phosphate + CTP + H(+) = 1-octadecanoyl-2-(9Z,12Z-octadecadienoyl)-sn-glycero-3-cytidine-5'-diphosphate + diphosphate. The enzyme catalyses 1-hexadecanoyl-2-(5Z,8Z,11Z,14Z-eicosatetraenoyl)-sn-glycero-3-phosphate + CTP + H(+) = 1-hexadecanoyl-2-(5Z,8Z,11Z,14Z-eicosatetraenoyl)-sn-glycero-3-cytidine-5'-diphosphate + diphosphate. The catalysed reaction is 1,2-di-(5Z,8Z,11Z,14Z)-eicosatetraenoyl-sn-glycero-3-phosphate + CTP + H(+) = 1,2-di-(5Z,8Z,11Z,14Z-eicosatetraenoyl)-sn-glycero-3-cytidine-5'-diphosphate + diphosphate. It catalyses the reaction 1-octadecanoyl-2-(9Z-octadecenoyl)-sn-glycero-3-phosphate + CTP + H(+) = 1-octadecanoyl-2-(9Z-octadecenoyl)-sn-glycero-3-cytidine-5'-diphosphate + diphosphate. It carries out the reaction 1-octadecanoyl-2-(4Z,7Z,10Z,13Z,16Z,19Z-docosahexaenoyl)-sn-glycero-3-phosphate + CTP + H(+) = 1-octadecanoyl-2-(4Z,7Z,10Z,13Z,16Z,19Z-docosahexaenoyl)-sn-glycero-3-cytidine-5'-diphosphate + diphosphate. The enzyme catalyses 1,2-di-(9Z,12Z-octadecadienoyl)-sn-glycero-3-phosphate + CTP + H(+) = 1,2-di-(9Z,12Z-octadecadienoyl)-sn-glycero-3-cytidine-5'-diphosphate + diphosphate. The catalysed reaction is 1,2-di-(9Z-octadecenoyl)-sn-glycero-3-phosphate + CTP + H(+) = 1,2-di-(9Z-octadecenoyl)-sn-glycero-3-cytidine-5'-diphosphate + diphosphate. Its pathway is phospholipid metabolism; CDP-diacylglycerol biosynthesis; CDP-diacylglycerol from sn-glycerol 3-phosphate: step 3/3. In terms of biological role, catalyzes the conversion of phosphatidic acid (PA) to CDP-diacylglycerol (CDP-DAG), an essential intermediate in the synthesis of phosphatidylglycerol, cardiolipin and phosphatidylinositol. Exhibits specificity for the nature of the acyl chains at the sn-1 and sn-2 positions in the substrate, PA and the preferred acyl chain composition is 1-stearoyl-2-arachidonoyl-sn-phosphatidic acid. Plays an important role in regulating the growth and maturation of lipid droplets which are storage organelles at the center of lipid and energy homeostasis. The sequence is that of Phosphatidate cytidylyltransferase 2 from Mus musculus (Mouse).